Here is a 345-residue protein sequence, read N- to C-terminus: Dihydroorotase (345 aa).

Zn(2+) contacts are provided by histidine 14 and histidine 16. Substrate contacts are provided by residues 16-18 (HLR) and asparagine 42. Zn(2+) is bound by residues lysine 102, histidine 139, and histidine 177. Lysine 102 bears the N6-carboxylysine mark. Histidine 139 lines the substrate pocket. Leucine 222 is a substrate binding site. Residue aspartate 250 participates in Zn(2+) binding. Aspartate 250 is a catalytic residue. The substrate site is built by histidine 254 and alanine 266.

This sequence belongs to the metallo-dependent hydrolases superfamily. DHOase family. Class II DHOase subfamily. Homodimer. Zn(2+) serves as cofactor.

It catalyses the reaction (S)-dihydroorotate + H2O = N-carbamoyl-L-aspartate + H(+). It functions in the pathway pyrimidine metabolism; UMP biosynthesis via de novo pathway; (S)-dihydroorotate from bicarbonate: step 3/3. Catalyzes the reversible cyclization of carbamoyl aspartate to dihydroorotate. The sequence is that of Dihydroorotase from Nitrosomonas eutropha (strain DSM 101675 / C91 / Nm57).